Here is a 372-residue protein sequence, read N- to C-terminus: Cytochrome b (372 aa).

4 consecutive transmembrane segments (helical) span residues 25–45 (FGSM…FLAI), 69–90 (WIMQ…YIHI), 105–125 (WLSG…GYVL), and 170–190 (FFAL…IHII). The heme b site is built by histidine 75 and histidine 89. Residues histidine 174 and histidine 188 each contribute to the heme b site. Histidine 193 is a binding site for a ubiquinone. The next 4 helical transmembrane spans lie at 218 to 238 (YKDM…LSFL), 280 to 300 (LGGT…PFTH), 312 to 332 (LSQT…WTAT), and 339 to 358 (FITI…IMTP).

This sequence belongs to the cytochrome b family. In terms of assembly, the cytochrome bc1 complex contains 3 respiratory subunits (MT-CYB, CYC1 and UQCRFS1), 2 core proteins (UQCRC1 and UQCRC2) and probably 6 low-molecular weight proteins. Heme b is required as a cofactor.

The protein localises to the mitochondrion inner membrane. In terms of biological role, component of the ubiquinol-cytochrome c reductase complex (complex III or cytochrome b-c1 complex) that is part of the mitochondrial respiratory chain. The b-c1 complex mediates electron transfer from ubiquinol to cytochrome c. Contributes to the generation of a proton gradient across the mitochondrial membrane that is then used for ATP synthesis. The chain is Cytochrome b (MT-CYB) from Aspidelaps scutatus (Shield-nose snake).